We begin with the raw amino-acid sequence, 270 residues long: Glucosamine-6-phosphate deaminase (270 aa).

Asp-68 acts as the Proton acceptor; for enolization step in catalysis. Catalysis depends on Asp-145, which acts as the For ring-opening step. The active-site Proton acceptor; for ring-opening step is the His-147. The active-site For ring-opening step is the Glu-152.

This sequence belongs to the glucosamine/galactosamine-6-phosphate isomerase family. NagB subfamily.

The catalysed reaction is alpha-D-glucosamine 6-phosphate + H2O = beta-D-fructose 6-phosphate + NH4(+). It functions in the pathway amino-sugar metabolism; N-acetylneuraminate degradation; D-fructose 6-phosphate from N-acetylneuraminate: step 5/5. In terms of biological role, catalyzes the reversible isomerization-deamination of glucosamine 6-phosphate (GlcN6P) to form fructose 6-phosphate (Fru6P) and ammonium ion. The chain is Glucosamine-6-phosphate deaminase from Bifidobacterium longum (strain DJO10A).